A 256-amino-acid polypeptide reads, in one-letter code: 5-oxoprolinase subunit A 3 (256 aa).

Belongs to the LamB/PxpA family. In terms of assembly, forms a complex composed of PxpA, PxpB and PxpC.

The enzyme catalyses 5-oxo-L-proline + ATP + 2 H2O = L-glutamate + ADP + phosphate + H(+). Catalyzes the cleavage of 5-oxoproline to form L-glutamate coupled to the hydrolysis of ATP to ADP and inorganic phosphate. In Pseudomonas syringae pv. tomato (strain ATCC BAA-871 / DC3000), this protein is 5-oxoprolinase subunit A 3.